The chain runs to 323 residues: tRNA dimethylallyltransferase (323 aa).

Position 12–19 (12–19 (GPTAAGKT)) interacts with ATP. 14–19 (TAAGKT) is a binding site for substrate. 2 interaction with substrate tRNA regions span residues 37–40 (DSAL) and 161–165 (QRLTR).

The protein belongs to the IPP transferase family. As to quaternary structure, monomer. Mg(2+) serves as cofactor.

It catalyses the reaction adenosine(37) in tRNA + dimethylallyl diphosphate = N(6)-dimethylallyladenosine(37) in tRNA + diphosphate. Catalyzes the transfer of a dimethylallyl group onto the adenine at position 37 in tRNAs that read codons beginning with uridine, leading to the formation of N6-(dimethylallyl)adenosine (i(6)A). The sequence is that of tRNA dimethylallyltransferase from Pseudomonas fluorescens (strain ATCC BAA-477 / NRRL B-23932 / Pf-5).